Reading from the N-terminus, the 171-residue chain is Signal peptidase complex catalytic subunit SEC11 (171 aa).

Topologically, residues 1–6 (MNIRQQ) are cytoplasmic. Residues 7–24 (LVQLLNLAMVLSTAFMFW) traverse the membrane as a helical; Signal-anchor for type II membrane protein segment. Topologically, residues 25 to 171 (KGLGLVTNSN…MALSTLLTRE (147 aa)) are lumenal. Residues Ser44, His83, and Asp113 each act as charge relay system in the active site. The C-terminal short (CTS) helix stretch occupies residues 157 to 168 (GLLGLMALSTLL).

Belongs to the peptidase S26B family. In terms of assembly, component of the signal peptidase complex (SPC) composed of a catalytic subunit SEC11 and three accessory subunits SPC1, SPC2 and SPC3. The complex induces a local thinning of the ER membrane which is used to measure the length of the signal peptide (SP) h-region of protein substrates. This ensures the selectivity of the complex towards h-regions shorter than 18-20 amino acids. SPC associates with the translocon complex.

The protein localises to the endoplasmic reticulum membrane. The catalysed reaction is Cleavage of hydrophobic, N-terminal signal or leader sequences from secreted and periplasmic proteins.. Functionally, catalytic component of the signal peptidase complex (SPC) which catalyzes the cleavage of N-terminal signal sequences from nascent proteins as they are translocated into the lumen of the endoplasmic reticulum. Specifically cleaves N-terminal signal peptides that contain a hydrophobic alpha-helix (h-region) shorter than 18-20 amino acids. This Komagataella phaffii (strain GS115 / ATCC 20864) (Yeast) protein is Signal peptidase complex catalytic subunit SEC11 (SEC11).